The chain runs to 475 residues: uncharacterized protein (475 aa).

The chain crosses the membrane as a helical span at residues 19 to 39 (IKVGVFFVAILLILTGILLTI). Disordered stretches follow at residues 55–79 (GEYHELNTSPNENSTALQPDENATS) and 330–350 (SSPFNPNRRHPVTGRIRPHKG). Over residues 60–79 (LNTSPNENSTALQPDENATS) the composition is skewed to polar residues. Basic residues predominate over residues 336–348 (NRRHPVTGRIRPH). His-348 contacts Zn(2+).

In the central section; belongs to the OapA family. It in the C-terminal section; belongs to the peptidase M23B family. Zn(2+) serves as cofactor.

It localises to the cell membrane. This is an uncharacterized protein from Haemophilus influenzae (strain ATCC 51907 / DSM 11121 / KW20 / Rd).